The following is a 166-amino-acid chain: Outer membrane protein assembly factor BamE (166 aa).

The signal sequence occupies residues 1-18 (MKRTVFPLAVAAALTLTA). Residue Cys19 is the site of N-palmitoyl cysteine attachment. Cys19 carries the S-diacylglycerol cysteine lipid modification. Positions 143–166 (LFSNDDSGEMPVKPESKPSDLLNE) are disordered.

The protein belongs to the BamE family. As to quaternary structure, part of the Bam complex.

The protein localises to the cell outer membrane. Its function is as follows. Part of the outer membrane protein assembly complex, which is involved in assembly and insertion of beta-barrel proteins into the outer membrane. The polypeptide is Outer membrane protein assembly factor BamE (Methylomonas methanica (strain DSM 25384 / MC09)).